Here is a 345-residue protein sequence, read N- to C-terminus: Glycerol-3-phosphate dehydrogenase [NAD(P)+] (345 aa).

5 residues coordinate NADPH: serine 11, tryptophan 12, histidine 32, arginine 33, and lysine 106. The sn-glycerol 3-phosphate site is built by lysine 106, glycine 137, and serine 139. Alanine 141 contacts NADPH. Lysine 192, aspartate 245, serine 255, arginine 256, and asparagine 257 together coordinate sn-glycerol 3-phosphate. The Proton acceptor role is filled by lysine 192. Arginine 256 contacts NADPH. NADPH is bound by residues valine 280 and glutamate 282.

It belongs to the NAD-dependent glycerol-3-phosphate dehydrogenase family.

Its subcellular location is the cytoplasm. The enzyme catalyses sn-glycerol 3-phosphate + NAD(+) = dihydroxyacetone phosphate + NADH + H(+). It catalyses the reaction sn-glycerol 3-phosphate + NADP(+) = dihydroxyacetone phosphate + NADPH + H(+). It functions in the pathway membrane lipid metabolism; glycerophospholipid metabolism. Catalyzes the reduction of the glycolytic intermediate dihydroxyacetone phosphate (DHAP) to sn-glycerol 3-phosphate (G3P), the key precursor for phospholipid synthesis. In Bacillus pumilus (strain SAFR-032), this protein is Glycerol-3-phosphate dehydrogenase [NAD(P)+].